The primary structure comprises 475 residues: Putative aldehyde dehydrogenase (475 aa).

Residues 146–147 (WN) and 223–224 (GS) each bind NAD(+). The active-site Proton acceptor is the glutamate 245. Leucine 246 contacts NAD(+). Cysteine 279 acts as the Nucleophile in catalysis. Position 379 (glutamate 379) interacts with NAD(+).

It belongs to the aldehyde dehydrogenase family.

It catalyses the reaction an aldehyde + NAD(+) + H2O = a carboxylate + NADH + 2 H(+). This Staphylococcus aureus (strain bovine RF122 / ET3-1) protein is Putative aldehyde dehydrogenase.